The sequence spans 273 residues: Formamidopyrimidine-DNA glycosylase (273 aa).

Proline 2 acts as the Schiff-base intermediate with DNA in catalysis. Glutamate 3 (proton donor) is an active-site residue. Lysine 57 acts as the Proton donor; for beta-elimination activity in catalysis. DNA is bound by residues histidine 90, arginine 109, and lysine 150. Residues 235 to 269 (KVYGRAGKECPVCSSKIEEEKIGQRNSFWCGKCQF) form an FPG-type zinc finger. Residue arginine 259 is the Proton donor; for delta-elimination activity of the active site.

This sequence belongs to the FPG family. Monomer. It depends on Zn(2+) as a cofactor.

The enzyme catalyses Hydrolysis of DNA containing ring-opened 7-methylguanine residues, releasing 2,6-diamino-4-hydroxy-5-(N-methyl)formamidopyrimidine.. It carries out the reaction 2'-deoxyribonucleotide-(2'-deoxyribose 5'-phosphate)-2'-deoxyribonucleotide-DNA = a 3'-end 2'-deoxyribonucleotide-(2,3-dehydro-2,3-deoxyribose 5'-phosphate)-DNA + a 5'-end 5'-phospho-2'-deoxyribonucleoside-DNA + H(+). Involved in base excision repair of DNA damaged by oxidation or by mutagenic agents. Acts as a DNA glycosylase that recognizes and removes damaged bases. Has a preference for oxidized purines, such as 7,8-dihydro-8-oxoguanine (8-oxoG). Has AP (apurinic/apyrimidinic) lyase activity and introduces nicks in the DNA strand. Cleaves the DNA backbone by beta-delta elimination to generate a single-strand break at the site of the removed base with both 3'- and 5'-phosphates. The sequence is that of Formamidopyrimidine-DNA glycosylase from Aliivibrio fischeri (strain MJ11) (Vibrio fischeri).